Consider the following 273-residue polypeptide: Bifunctional protein FolD (273 aa).

Residues 155–157 (GRS), S182, and I223 each bind NADP(+).

The protein belongs to the tetrahydrofolate dehydrogenase/cyclohydrolase family. In terms of assembly, homodimer.

The enzyme catalyses (6R)-5,10-methylene-5,6,7,8-tetrahydrofolate + NADP(+) = (6R)-5,10-methenyltetrahydrofolate + NADPH. It carries out the reaction (6R)-5,10-methenyltetrahydrofolate + H2O = (6R)-10-formyltetrahydrofolate + H(+). It functions in the pathway one-carbon metabolism; tetrahydrofolate interconversion. Catalyzes the oxidation of 5,10-methylenetetrahydrofolate to 5,10-methenyltetrahydrofolate and then the hydrolysis of 5,10-methenyltetrahydrofolate to 10-formyltetrahydrofolate. This Pseudothermotoga lettingae (strain ATCC BAA-301 / DSM 14385 / NBRC 107922 / TMO) (Thermotoga lettingae) protein is Bifunctional protein FolD.